The chain runs to 397 residues: uncharacterized protein (397 aa).

This is an uncharacterized protein from Thermotoga maritima (strain ATCC 43589 / DSM 3109 / JCM 10099 / NBRC 100826 / MSB8).